The sequence spans 336 residues: tRNA N6-adenosine threonylcarbamoyltransferase (336 aa).

Positions 112 and 116 each coordinate Fe cation. Substrate contacts are provided by residues 136–140, aspartate 169, glycine 182, and asparagine 276; that span reads LVSGG. Aspartate 304 lines the Fe cation pocket.

It belongs to the KAE1 / TsaD family. Requires Fe(2+) as cofactor.

It localises to the cytoplasm. It catalyses the reaction L-threonylcarbamoyladenylate + adenosine(37) in tRNA = N(6)-L-threonylcarbamoyladenosine(37) in tRNA + AMP + H(+). Required for the formation of a threonylcarbamoyl group on adenosine at position 37 (t(6)A37) in tRNAs that read codons beginning with adenine. Is involved in the transfer of the threonylcarbamoyl moiety of threonylcarbamoyl-AMP (TC-AMP) to the N6 group of A37, together with TsaE and TsaB. TsaD likely plays a direct catalytic role in this reaction. This is tRNA N6-adenosine threonylcarbamoyltransferase from Francisella philomiragia subsp. philomiragia (strain ATCC 25017 / CCUG 19701 / FSC 153 / O#319-036).